Consider the following 218-residue polypeptide: Probable 2-aminoethanethiol dioxygenase (218 aa).

The cofactor is Fe cation.

It catalyses the reaction cysteamine + O2 = hypotaurine + H(+). The protein is Probable 2-aminoethanethiol dioxygenase (ado-1) of Dictyostelium discoideum (Social amoeba).